The chain runs to 65 residues: Large ribosomal subunit protein bL32 (65 aa).

Positions 1–18 (MAVPKRRHSKSRTRKRRS) are enriched in basic residues. The tract at residues 1 to 20 (MAVPKRRHSKSRTRKRRSTY) is disordered.

It belongs to the bacterial ribosomal protein bL32 family.

In Salinibacter ruber (strain DSM 13855 / M31), this protein is Large ribosomal subunit protein bL32.